Reading from the N-terminus, the 248-residue chain is 1-(5-phosphoribosyl)-5-[(5-phosphoribosylamino)methylideneamino] imidazole-4-carboxamide isomerase (248 aa).

The Proton acceptor role is filled by Asp8. The active-site Proton donor is Asp129.

The protein belongs to the HisA/HisF family.

The protein resides in the cytoplasm. The enzyme catalyses 1-(5-phospho-beta-D-ribosyl)-5-[(5-phospho-beta-D-ribosylamino)methylideneamino]imidazole-4-carboxamide = 5-[(5-phospho-1-deoxy-D-ribulos-1-ylimino)methylamino]-1-(5-phospho-beta-D-ribosyl)imidazole-4-carboxamide. Its pathway is amino-acid biosynthesis; L-histidine biosynthesis; L-histidine from 5-phospho-alpha-D-ribose 1-diphosphate: step 4/9. This is 1-(5-phosphoribosyl)-5-[(5-phosphoribosylamino)methylideneamino] imidazole-4-carboxamide isomerase from Rhizobium etli (strain CIAT 652).